The sequence spans 118 residues: Large ribosomal subunit protein bL20 (118 aa).

This sequence belongs to the bacterial ribosomal protein bL20 family.

In terms of biological role, binds directly to 23S ribosomal RNA and is necessary for the in vitro assembly process of the 50S ribosomal subunit. It is not involved in the protein synthesizing functions of that subunit. The polypeptide is Large ribosomal subunit protein bL20 (Francisella tularensis subsp. tularensis (strain WY96-3418)).